The sequence spans 548 residues: Druantia protein DruB (548 aa).

It localises to the cytoplasm. Its function is as follows. Component of antiviral defense system Druantia type I, composed of DruA, DruB, DruC, DruD and DruE. Expression of Druantia in E.coli (strain MG1655) confers resistance to phage lambda, SECphi18, SECphi27 and T4. The polypeptide is Druantia protein DruB (Escherichia coli (strain UMEA 4076-1)).